The sequence spans 404 residues: Indole-3-acetate O-methyltransferase 1 (404 aa).

Residues 82-83, N88, D120, 169-171, and 186-188 each bind S-adenosyl-L-methionine; these read GC, TFY, and TFS. 6 residues coordinate Mg(2+): N208, V212, R294, D295, F297, and N298.

The protein belongs to the methyltransferase superfamily. SABATH family. In terms of assembly, homodimer. The cofactor is Mg(2+). Expressed in roots and panicles.

The catalysed reaction is (indol-3-yl)acetate + S-adenosyl-L-methionine = methyl (indol-3-yl)acetate + S-adenosyl-L-homocysteine. Catalyzes the methylation of the free carboxyl end of the plant hormone indole-3-acetic acid (IAA). Converts IAA to IAA methyl ester (MeIAA). Regulates IAA activities by IAA methylation. Methylation of IAA plays an important role in regulating plant development and auxin homeostasis. MeIAA seems to be an inactive form of IAA. This Oryza sativa subsp. japonica (Rice) protein is Indole-3-acetate O-methyltransferase 1 (IAMT1).